The chain runs to 331 residues: Holliday junction branch migration complex subunit RuvB (331 aa).

Residues 1–186 form a large ATPase domain (RuvB-L) region; sequence MAKTMMQDRL…FGIVQRLEFY (186 aa). ATP is bound by residues Ile-25, Arg-26, Gly-67, Lys-70, Thr-71, Thr-72, 133–135, Arg-176, Tyr-186, and Arg-223; that span reads EDF. Residue Thr-71 coordinates Mg(2+). The small ATPAse domain (RuvB-S) stretch occupies residues 187 to 257; it reads NIADLTTIVS…IAGSALDMLA (71 aa). Positions 260–331 are head domain (RuvB-H); sequence RRGLDHLDRR…LTQMAIDQML (72 aa). The DNA site is built by Arg-296, Arg-315, and Arg-320.

It belongs to the RuvB family. As to quaternary structure, homohexamer. Forms an RuvA(8)-RuvB(12)-Holliday junction (HJ) complex. HJ DNA is sandwiched between 2 RuvA tetramers; dsDNA enters through RuvA and exits via RuvB. An RuvB hexamer assembles on each DNA strand where it exits the tetramer. Each RuvB hexamer is contacted by two RuvA subunits (via domain III) on 2 adjacent RuvB subunits; this complex drives branch migration. In the full resolvosome a probable DNA-RuvA(4)-RuvB(12)-RuvC(2) complex forms which resolves the HJ.

Its subcellular location is the cytoplasm. The catalysed reaction is ATP + H2O = ADP + phosphate + H(+). The RuvA-RuvB-RuvC complex processes Holliday junction (HJ) DNA during genetic recombination and DNA repair, while the RuvA-RuvB complex plays an important role in the rescue of blocked DNA replication forks via replication fork reversal (RFR). RuvA specifically binds to HJ cruciform DNA, conferring on it an open structure. The RuvB hexamer acts as an ATP-dependent pump, pulling dsDNA into and through the RuvAB complex. RuvB forms 2 homohexamers on either side of HJ DNA bound by 1 or 2 RuvA tetramers; 4 subunits per hexamer contact DNA at a time. Coordinated motions by a converter formed by DNA-disengaged RuvB subunits stimulates ATP hydrolysis and nucleotide exchange. Immobilization of the converter enables RuvB to convert the ATP-contained energy into a lever motion, pulling 2 nucleotides of DNA out of the RuvA tetramer per ATP hydrolyzed, thus driving DNA branch migration. The RuvB motors rotate together with the DNA substrate, which together with the progressing nucleotide cycle form the mechanistic basis for DNA recombination by continuous HJ branch migration. Branch migration allows RuvC to scan DNA until it finds its consensus sequence, where it cleaves and resolves cruciform DNA. In Psychrobacter cryohalolentis (strain ATCC BAA-1226 / DSM 17306 / VKM B-2378 / K5), this protein is Holliday junction branch migration complex subunit RuvB.